Consider the following 390-residue polypeptide: Chorismate synthase 1 (390 aa).

Positions 39 and 45 each coordinate NADP(+). The disordered stretch occupies residues 95–117 (EQEEKEMKRKVTKPRPGHADLNG). FMN is bound by residues 132–134 (RSS), 253–254 (NA), Gly-298, 313–317 (KPIPT), and Arg-339.

It belongs to the chorismate synthase family. In terms of assembly, homotetramer. FMNH2 serves as cofactor.

It carries out the reaction 5-O-(1-carboxyvinyl)-3-phosphoshikimate = chorismate + phosphate. It functions in the pathway metabolic intermediate biosynthesis; chorismate biosynthesis; chorismate from D-erythrose 4-phosphate and phosphoenolpyruvate: step 7/7. Functionally, catalyzes the anti-1,4-elimination of the C-3 phosphate and the C-6 proR hydrogen from 5-enolpyruvylshikimate-3-phosphate (EPSP) to yield chorismate, which is the branch point compound that serves as the starting substrate for the three terminal pathways of aromatic amino acid biosynthesis. This reaction introduces a second double bond into the aromatic ring system. This is Chorismate synthase 1 from Bacillus cereus (strain ZK / E33L).